Here is a 289-residue protein sequence, read N- to C-terminus: Tachykinins (289 aa).

Residues 1-24 (MRPLSGLIALALLLLLLLTAPSSA) form the signal peptide. Residues 24–94 (AADTETESSG…DEEADSSYAE (71 aa)) form a disordered region. A propeptide spanning residues 25-47 (ADTETESSGSPLTPGAEEPRRVV) is cleaved from the precursor. R59 carries the arginine amide modification. The segment covering 60 to 69 (GKKDEEHDTS) has biased composition (basic and acidic residues). Asparagine amide is present on N95. R110 is modified (arginine amide). V153 is modified (valine amide). Arginine amide occurs at positions 165, 200, 239, and 281. Positions 285–289 (PALFE) are excised as a propeptide.

This sequence belongs to the tachykinin family. Strong expression is seen in a group of 14 cells plus one isolated cell in the midgut of stage 17 embryos. Also expressed in a pair of medially located unidentified cells, just posterior to the brain, and in two lateral groups of cells that may be associated with tracheae. Expression in the larval gut is restricted to cells with endocrine cell-like morphology in the posterior midgut, just anterior to the malphigian tubules. In the brain, expression is detected in a restricted number of neuronal cell bodies. Expression in the adult female gut is restricted to the midgut with no expression detected in the hindgut.

Its subcellular location is the secreted. Its function is as follows. Tachykinins are active peptides which excite neurons, evoke behavioral responses, are potent vasodilators and secretagogues, and contract (directly or indirectly) many smooth muscles. Stimulates gut muscle contractions. Required for the response to the male sex pheromone CH503 which is transferred from males to females during mating and inhibits courtship behavior by other males. The Gr68a gustatory receptor is required for detection of the pheromone and Gr68a-expressing neurons in the male foreleg relay signals to the suboesophageal zone (SEZ) which leads to courtship suppression through release of tachykinin from a cluster of 8-10 neurons in the SEZ. The protein is Tachykinins of Drosophila melanogaster (Fruit fly).